The chain runs to 262 residues: Acyl-[acyl-carrier-protein]--UDP-N-acetylglucosamine O-acyltransferase (262 aa).

It belongs to the transferase hexapeptide repeat family. LpxA subfamily. As to quaternary structure, homotrimer.

Its subcellular location is the cytoplasm. The catalysed reaction is a (3R)-hydroxyacyl-[ACP] + UDP-N-acetyl-alpha-D-glucosamine = a UDP-3-O-[(3R)-3-hydroxyacyl]-N-acetyl-alpha-D-glucosamine + holo-[ACP]. The protein operates within glycolipid biosynthesis; lipid IV(A) biosynthesis; lipid IV(A) from (3R)-3-hydroxytetradecanoyl-[acyl-carrier-protein] and UDP-N-acetyl-alpha-D-glucosamine: step 1/6. Functionally, involved in the biosynthesis of lipid A, a phosphorylated glycolipid that anchors the lipopolysaccharide to the outer membrane of the cell. This is Acyl-[acyl-carrier-protein]--UDP-N-acetylglucosamine O-acyltransferase from Campylobacter concisus (strain 13826).